A 134-amino-acid chain; its full sequence is MKSVFTISASLAISLMLCCTAQANDHKLLGAIAMPRNETNDLALKLPVCRIVKRIQLSADHGDLQLSGASVYFKAARSASQSLNIPSEIKEGQTTDWININSDNDNKRCVSKITFSGHTVNSSDMATLKIIGDD.

The signal sequence occupies residues Met1–Ala23.

Belongs to the UPF0412 family.

In Escherichia coli (strain K12), this protein is UPF0412 protein YaaI.